The primary structure comprises 131 residues: Squamosa promoter-binding-like protein 3 (131 aa).

A compositionally biased stretch (basic and acidic residues) spans 1–17; it reads MSMRRSKAEGKRSLREL. Residues 1-54 are disordered; that stretch reads MSMRRSKAEGKRSLRELSEEEEEEEETEDEDTFEEEEALEKKQKGKATSSSGVC. The span at 18 to 38 shows a compositional bias: acidic residues; sequence SEEEEEEEETEDEDTFEEEEA. Positions 45 to 129 are sufficient and necessary for DNA binding; that stretch reads GKATSSSGVC…GHNERRRKST (85 aa). An SBP-type zinc finger spans residues 51-128; the sequence is SGVCQVESCT…AGHNERRRKS (78 aa). Zn(2+)-binding residues include cysteine 54, cysteine 59, cysteine 76, histidine 79, cysteine 95, cysteine 98, histidine 102, and cysteine 114. The short motif at 111 to 127 is the Bipartite nuclear localization signal element; the sequence is KRSCRRRLAGHNERRRK.

Zn(2+) serves as cofactor. As to expression, expressed in vegetative and inflorescence apical meristems, floral meristems, leaf and flower organ primordia, inflorescence stem tissue and to lower extent in roots.

The protein localises to the nucleus. The protein resides in the cytoplasm. In terms of biological role, trans-acting factor that binds specifically to the consensus nucleotide sequence 5'-TNCGTACAA-3' of AP1 promoter. Binds specifically to the 5'-GTAC-3' core sequence. Promotes both vegetative phase change and flowering. Regulates phase-specific patterns of leaf epidermal differentiation and flowering time, but does not seem to affect leaf shape. This Arabidopsis thaliana (Mouse-ear cress) protein is Squamosa promoter-binding-like protein 3 (SPL3).